The sequence spans 467 residues: Cruzipain (467 aa).

Positions 1 to 18 (MSGWARALLLAAVLVVMA) are cleaved as a signal peptide. The propeptide at 19-122 (CLVPAATASL…RVPVKVEVVG (104 aa)) is activation peptide. Cystine bridges form between C144-C185, C178-C223, and C277-C325. C147 is an active-site residue. Residue N169 is glycosylated (N-linked (GlcNAc...) asparagine). The active site involves H284. N292 is a glycosylation site (N-linked (GlcNAc...) asparagine). N304 is a catalytic residue. The segment at 333 to 355 (SAVVGGPGPTPEPTTTTTTSAPG) is disordered. Residues 345–354 (PTTTTTTSAP) show a composition bias toward low complexity. Residue N377 is glycosylated (N-linked (GlcNAc...) asparagine).

This sequence belongs to the peptidase C1 family.

It catalyses the reaction Broad endopeptidase specificity similar to that of cathepsin L.. With respect to regulation, strongly inhibited by E-64 (L-trans-epoxysuccinylleucylamido(4-guanidino)butane), Leupeptin, and N-alpha-p-tosyl-L-lysine chloromethyl ketone. In terms of biological role, hydrolyzes chromogenic peptides at the carboxyl Arg or Lys; requires at least one more amino acid, preferably Arg, Phe, Val or Leu, between the terminal Arg or Lys and the amino-blocking group. Functionally, the cysteine protease may play an important role in the development and differentiation of the parasites at several stages of their life cycle. This Trypanosoma cruzi protein is Cruzipain.